Consider the following 437-residue polypeptide: Amino-acid acetyltransferase (437 aa).

One can recognise an N-acetyltransferase domain in the interval 289 to 429; sequence ENIRLATSFD…EHYNYQRMSK (141 aa).

It belongs to the acetyltransferase family. ArgA subfamily.

It is found in the cytoplasm. The enzyme catalyses L-glutamate + acetyl-CoA = N-acetyl-L-glutamate + CoA + H(+). It participates in amino-acid biosynthesis; L-arginine biosynthesis; N(2)-acetyl-L-ornithine from L-glutamate: step 1/4. This Actinobacillus pleuropneumoniae serotype 3 (strain JL03) protein is Amino-acid acetyltransferase.